Here is a 322-residue protein sequence, read N- to C-terminus: Pilin gene-inverting protein (322 aa).

Functionally, may be the site-specific invertase required for pilin gene inversion. Moraxella can express either a Q or I pilin; the inversion of 2 kb of DNA determines which pilin is expressed. The protein is Pilin gene-inverting protein (piv) of Moraxella bovis.